Reading from the N-terminus, the 679-residue chain is Methionine--tRNA ligase (679 aa).

The 'HIGH' region motif lies at 12–22 (PYANGAIHLGH). The Zn(2+) site is built by Cys-143, Cys-146, Cys-156, and Cys-159. Residues 328–332 (KMSKS) carry the 'KMSKS' region motif. Lys-331 provides a ligand contact to ATP. Residues 577–679 (DFAKLDLRVA…EGIRPGMQVK (103 aa)) form the tRNA-binding domain.

It belongs to the class-I aminoacyl-tRNA synthetase family. MetG type 1 subfamily. In terms of assembly, homodimer. It depends on Zn(2+) as a cofactor.

Its subcellular location is the cytoplasm. The catalysed reaction is tRNA(Met) + L-methionine + ATP = L-methionyl-tRNA(Met) + AMP + diphosphate. Is required not only for elongation of protein synthesis but also for the initiation of all mRNA translation through initiator tRNA(fMet) aminoacylation. The polypeptide is Methionine--tRNA ligase (Actinobacillus pleuropneumoniae serotype 5b (strain L20)).